Here is a 511-residue protein sequence, read N- to C-terminus: RNA polymerase principal sigma factor HrdB (511 aa).

Positions 72 to 186 (SAAEPKRTRK…AATEEPEGTE (115 aa)) are disordered. A compositionally biased stretch (basic residues) spans 78 to 93 (RTRKSVAAKSPAKRTA). The segment covering 94 to 121 (TKAVAAKPVTSRKATAPAAPAAPATEPA) has biased composition (low complexity). Over residues 132-158 (AAAKKTTAKKATAKKTTAKKAAAKKTT) the composition is skewed to basic residues. The tract at residues 211 to 347 (TADPVKDYLK…ITRAMADQAR (137 aa)) is binds RNA polymerase-binding protein RbpA. Residues 278–348 (LLEANLRLVV…TRAMADQART (71 aa)) are sigma-70 factor domain-2. An Interaction with polymerase core subunit RpoC motif is present at residues 302 to 305 (DLIQ). Residues 357–433 (EVINKLARVQ…DSEAVVPADA (77 aa)) are sigma-70 factor domain-3. The sigma-70 factor domain-4 stretch occupies residues 446–499 (VLDTLSEREAGVVSMRFGLTDGQPKTLDEIGKVYGVTRERIRQIESKTMSKLRH). A DNA-binding region (H-T-H motif) is located at residues 472-491 (LDEIGKVYGVTRERIRQIES).

Belongs to the sigma-70 factor family. In terms of assembly, homotrimer (Potential). interacts transiently with the RNA polymerase core complex. Interacts with RNA polymerase-binding protein RbpA via its sigma-2 region (residues 211-347) in a free form.

Functionally, sigma factors are initiation factors that promote the attachment of RNA polymerase to specific initiation sites and are then released. This sigma factor is the primary sigma factor during exponential growth. Its activity is stimulated by RbpA. The chain is RNA polymerase principal sigma factor HrdB (hrdB) from Streptomyces coelicolor (strain ATCC BAA-471 / A3(2) / M145).